The chain runs to 574 residues: GRB2-associated-binding protein 4 (574 aa).

A disordered region spans residues 1–33; sequence MSLPSPSPSRELCPPDPAFAPLSSWPGSGPAGG. A PH domain is found at 39-152; it reads HVLYSGWLRK…WVQSICQICG (114 aa). Disordered stretches follow at residues 176 to 200, 215 to 234, 293 to 331, and 418 to 513; these read PAEPSCSHQHLPQEQEPTSEPPVSH, LRSHQHASQRAEHARSASFS, SLASHGHTRGSLTGSEADNEASSGKYTQHGGGNASRPAE, and PPVN…PRST. Over residues 181–193 the composition is skewed to polar residues; the sequence is CSHQHLPQEQEPT. 2 stretches are compositionally biased toward polar residues: residues 302 to 318 and 424 to 442; these read GSLTGSEADNEASSGKY and LKPNQKANPTPPNLRNNRV. Positions 457 to 478 are enriched in low complexity; sequence SGTSHTFDSSSSQHPISTQSIT. Over residues 502–513 the composition is skewed to polar residues; it reads GGTSSSAPPRST.

This sequence belongs to the GAB family.

The chain is GRB2-associated-binding protein 4 (GAB4) from Homo sapiens (Human).